Reading from the N-terminus, the 197-residue chain is Probable GTP-binding protein EngB (197 aa).

In terms of domain architecture, EngB-type G spans 25-197 (SAPEIAFAGR…VRDEFFKFTR (173 aa)). Residues 33–40 (GRSNVGKS), 60–64 (GCTRQ), 79–82 (DLPG), 146–149 (TKID), and 177–179 (ISV) each bind GTP. Mg(2+)-binding residues include serine 40 and threonine 62.

Belongs to the TRAFAC class TrmE-Era-EngA-EngB-Septin-like GTPase superfamily. EngB GTPase family. It depends on Mg(2+) as a cofactor.

In terms of biological role, necessary for normal cell division and for the maintenance of normal septation. This is Probable GTP-binding protein EngB from Wolbachia sp. subsp. Brugia malayi (strain TRS).